Reading from the N-terminus, the 183-residue chain is Adenine phosphoribosyltransferase 3 (183 aa).

The protein belongs to the purine/pyrimidine phosphoribosyltransferase family. In terms of assembly, homodimer.

Its subcellular location is the cytoplasm. The enzyme catalyses AMP + diphosphate = 5-phospho-alpha-D-ribose 1-diphosphate + adenine. It participates in purine metabolism; AMP biosynthesis via salvage pathway; AMP from adenine: step 1/1. In terms of biological role, catalyzes a salvage reaction resulting in the formation of AMP, that is energically less costly than de novo synthesis. May contribute to the recycling of adenine into adenylate nucleotides and the inactivation of cytokinins by phosphoribosylation. Possesses low activity toward adenine and cytokinins. This is Adenine phosphoribosyltransferase 3 (APT3) from Arabidopsis thaliana (Mouse-ear cress).